The chain runs to 360 residues: 8-hydroxygeraniol dehydrogenase (360 aa).

Zn(2+) is bound by residues Cys-50, His-72, Cys-103, Cys-106, Cys-109, Cys-117, and Cys-166.

This sequence belongs to the zinc-containing alcohol dehydrogenase family. Zn(2+) is required as a cofactor. Present in seedlings and vascular tissues (at protein level). Restricted to the epidermis.

The catalysed reaction is (6E)-8-hydroxygeraniol + 2 NADP(+) = (6E)-8-oxogeranial + 2 NADPH + 2 H(+). In terms of biological role, dehydrogenase involved in the biosynthesis of oxogeranial from hydroxygeraniol, a precursor of the terpenoid indole alkaloids such as vinblastine and vincristine. The protein is 8-hydroxygeraniol dehydrogenase (10HGO) of Catharanthus roseus (Madagascar periwinkle).